The primary structure comprises 214 residues: NADH-quinone oxidoreductase subunit C (214 aa).

It belongs to the complex I 30 kDa subunit family. In terms of assembly, NDH-1 is composed of 14 different subunits. Subunits NuoB, C, D, E, F, and G constitute the peripheral sector of the complex.

It is found in the cell inner membrane. It catalyses the reaction a quinone + NADH + 5 H(+)(in) = a quinol + NAD(+) + 4 H(+)(out). NDH-1 shuttles electrons from NADH, via FMN and iron-sulfur (Fe-S) centers, to quinones in the respiratory chain. The immediate electron acceptor for the enzyme in this species is believed to be ubiquinone. Couples the redox reaction to proton translocation (for every two electrons transferred, four hydrogen ions are translocated across the cytoplasmic membrane), and thus conserves the redox energy in a proton gradient. The chain is NADH-quinone oxidoreductase subunit C from Francisella tularensis subsp. holarctica (strain LVS).